A 456-amino-acid polypeptide reads, in one-letter code: Gamma-aminobutyric acid receptor subunit alpha-1 (456 aa).

Positions 1–27 (MKKSPGLSDYLWAWTLFLSTLTGRSYG) are cleaved as a signal peptide. The Extracellular portion of the chain corresponds to 28–253 (QPSLQDELKD…FHLKRKIGYF (226 aa)). N-linked (GlcNAc...) asparagine glycosylation occurs at N38. R94 is a binding site for 4-aminobutanoate. N-linked (GlcNAc...) asparagine glycosylation is present at N138. T157 lines the 4-aminobutanoate pocket. C166 and C180 form a disulfide bridge. A helical membrane pass occupies residues 254-274 (VIQTYLPCIMTVILSQVSFWL). Over 275 to 279 (NRESV) the chain is Cytoplasmic. The helical transmembrane segment at 280-301 (PARTVFGVTTVLTMTTLSISAR) threads the bilayer. The Extracellular portion of the chain corresponds to 302-311 (NSLPKVAYAT). The helical transmembrane segment at 312–333 (AMDWFIAVCYAFVFSALIEFAT) threads the bilayer. Residues 334-421 (VNYFTKRGYA…TFNSVSKIDR (88 aa)) lie on the Cytoplasmic side of the membrane. The helical transmembrane segment at 422–441 (LSRIAFPLLFGIFNLVYWAT) threads the bilayer. The Extracellular segment spans residues 442–456 (YLNREPQLKAPTPHQ).

It belongs to the ligand-gated ion channel (TC 1.A.9) family. Gamma-aminobutyric acid receptor (TC 1.A.9.5) subfamily. GABRA1 sub-subfamily. In terms of assembly, heteropentamer, formed by a combination of alpha (GABRA1-6), beta (GABRB1-3), gamma (GABRG1-3), delta (GABRD), epsilon (GABRE), rho (GABRR1-3), pi (GABRP) and theta (GABRQ) subunits, each subunit exhibiting distinct physiological and pharmacological properties. Interacts with UBQLN1. Interacts with TRAK1. Interacts with KIF21B. Identified in a complex of 720 kDa composed of LHFPL4, NLGN2, GABRA1, GABRB2, GABRG2 and GABRB3. Interacts with LHFPL4. Interacts with NLGN2. Interacts with SHISA7; interaction leads to the regulation of GABA(A) receptor trafficking, channel deactivation kinetics and pharmacology. Cerebellar granule cells, Purkinje cells and stellate/basket cells.

It localises to the postsynaptic cell membrane. The protein resides in the cell membrane. The protein localises to the cytoplasmic vesicle membrane. It catalyses the reaction chloride(in) = chloride(out). Its activity is regulated as follows. Allosterically activated by benzodiazepines, the neuroanesthetic alphaxalone and pentobarbital. Inhibited by the antagonist bicuculline. Potentiated by histamine. Functionally, alpha subunit of the heteropentameric ligand-gated chloride channel gated by gamma-aminobutyric acid (GABA), a major inhibitory neurotransmitter in the brain. GABA-gated chloride channels, also named GABA(A) receptors (GABAAR), consist of five subunits arranged around a central pore and contain GABA active binding site(s) located at the alpha and beta subunit interface(s). When activated by GABA, GABAARs selectively allow the flow of chloride anions across the cell membrane down their electrochemical gradient. Alpha-1/GABRA1-containing GABAARs are largely synaptic. Chloride influx into the postsynaptic neuron following GABAAR opening decreases the neuron ability to generate a new action potential, thereby reducing nerve transmission. GABAARs containing alpha-1 and beta-2 or -3 subunits exhibit synaptogenic activity; the gamma-2 subunit being necessary but not sufficient to induce rapid synaptic contacts formation. GABAARs function also as histamine receptor where histamine binds at the interface of two neighboring beta subunits and potentiates GABA response. GABAARs containing alpha, beta and epsilon subunits also permit spontaneous chloride channel activity while preserving the structural information required for GABA-gated openings. Alpha-1-mediated plasticity in the orbitofrontal cortex regulates context-dependent action selection. Together with rho subunits, may also control neuronal and glial GABAergic transmission in the cerebellum. In Bos taurus (Bovine), this protein is Gamma-aminobutyric acid receptor subunit alpha-1 (GABRA1).